We begin with the raw amino-acid sequence, 268 residues long: Ribosomal RNA small subunit methyltransferase A (268 aa).

Asparagine 18, leucine 20, glycine 45, glutamate 66, aspartate 91, and asparagine 112 together coordinate S-adenosyl-L-methionine.

This sequence belongs to the class I-like SAM-binding methyltransferase superfamily. rRNA adenine N(6)-methyltransferase family. RsmA subfamily.

It localises to the cytoplasm. The enzyme catalyses adenosine(1518)/adenosine(1519) in 16S rRNA + 4 S-adenosyl-L-methionine = N(6)-dimethyladenosine(1518)/N(6)-dimethyladenosine(1519) in 16S rRNA + 4 S-adenosyl-L-homocysteine + 4 H(+). In terms of biological role, specifically dimethylates two adjacent adenosines (A1518 and A1519) in the loop of a conserved hairpin near the 3'-end of 16S rRNA in the 30S particle. May play a critical role in biogenesis of 30S subunits. This is Ribosomal RNA small subunit methyltransferase A from Pseudoalteromonas translucida (strain TAC 125).